The following is a 321-amino-acid chain: Polyamine aminopropyltransferase (321 aa).

The region spanning 23 to 256 (HLLYLEHAGP…DEWSFSFGSD (234 aa)) is the PABS domain. Gln-53 lines the S-methyl-5'-thioadenosine pocket. Positions 84 and 108 each coordinate spermidine. S-methyl-5'-thioadenosine-binding positions include Glu-127 and 159-160 (DG). Asp-177 (proton acceptor) is an active-site residue.

Belongs to the spermidine/spermine synthase family. As to quaternary structure, homodimer or homotetramer.

Its subcellular location is the cytoplasm. It catalyses the reaction S-adenosyl 3-(methylsulfanyl)propylamine + putrescine = S-methyl-5'-thioadenosine + spermidine + H(+). Its pathway is amine and polyamine biosynthesis; spermidine biosynthesis; spermidine from putrescine: step 1/1. Catalyzes the irreversible transfer of a propylamine group from the amino donor S-adenosylmethioninamine (decarboxy-AdoMet) to putrescine (1,4-diaminobutane) to yield spermidine. This Korarchaeum cryptofilum (strain OPF8) protein is Polyamine aminopropyltransferase.